We begin with the raw amino-acid sequence, 429 residues long: Adenylosuccinate synthetase (429 aa).

Residues 12-18 (GDEGKGK) and 40-42 (GHT) contribute to the GTP site. Catalysis depends on D13, which acts as the Proton acceptor. Residues D13 and G40 each contribute to the Mg(2+) site. IMP is bound by residues 13-16 (DEGK), 38-41 (NAGH), T128, R142, Q223, T238, and R302. H41 functions as the Proton donor in the catalytic mechanism. 298-304 (TTTGRPR) is a substrate binding site. GTP contacts are provided by residues R304, 330–332 (SID), and 412–414 (SVG).

It belongs to the adenylosuccinate synthetase family. Homodimer. Mg(2+) serves as cofactor.

It is found in the cytoplasm. The catalysed reaction is IMP + L-aspartate + GTP = N(6)-(1,2-dicarboxyethyl)-AMP + GDP + phosphate + 2 H(+). It participates in purine metabolism; AMP biosynthesis via de novo pathway; AMP from IMP: step 1/2. Plays an important role in the de novo pathway of purine nucleotide biosynthesis. Catalyzes the first committed step in the biosynthesis of AMP from IMP. The sequence is that of Adenylosuccinate synthetase from Bacillus cereus (strain ATCC 10987 / NRS 248).